The chain runs to 312 residues: Ribosomal RNA small subunit methyltransferase H (312 aa).

Residues 32–34 (AGH), Asp-52, Phe-79, Asp-100, and Gln-107 each bind S-adenosyl-L-methionine.

It belongs to the methyltransferase superfamily. RsmH family.

It localises to the cytoplasm. It carries out the reaction cytidine(1402) in 16S rRNA + S-adenosyl-L-methionine = N(4)-methylcytidine(1402) in 16S rRNA + S-adenosyl-L-homocysteine + H(+). In terms of biological role, specifically methylates the N4 position of cytidine in position 1402 (C1402) of 16S rRNA. The sequence is that of Ribosomal RNA small subunit methyltransferase H from Listeria monocytogenes serotype 4b (strain F2365).